Consider the following 541-residue polypeptide: Peptide chain release factor 3 (541 aa).

A tr-type G domain is found at 14-283 (EARRNFAIIS…AFLDYALKPG (270 aa)). GTP-binding positions include 23-30 (SHPDAGKT), 91-95 (DTPGH), and 145-148 (NKLD).

It belongs to the TRAFAC class translation factor GTPase superfamily. Classic translation factor GTPase family. PrfC subfamily.

It localises to the cytoplasm. Its function is as follows. Increases the formation of ribosomal termination complexes and stimulates activities of RF-1 and RF-2. It binds guanine nucleotides and has strong preference for UGA stop codons. It may interact directly with the ribosome. The stimulation of RF-1 and RF-2 is significantly reduced by GTP and GDP, but not by GMP. This chain is Peptide chain release factor 3, found in Acaryochloris marina (strain MBIC 11017).